The following is a 40-amino-acid chain: Sarcotoxin-1D (40 aa).

This sequence belongs to the cecropin family.

It localises to the secreted. In terms of biological role, sarcotoxins, which are potent bactericidal proteins, are produced in response to injury. They are cytotoxic to both Gram-positive and Gram-negative bacteria. In Sarcophaga peregrina (Flesh fly), this protein is Sarcotoxin-1D.